The sequence spans 439 residues: ATP-dependent RNA helicase RhlB (439 aa).

The Q motif motif lies at 9 to 37 (QKFADLPLHPEVKQALAENGFEFCTPIQA). The region spanning 40-219 (LPVLLQSKDI…YDHMNDPVKV (180 aa)) is the Helicase ATP-binding domain. Residue 53–60 (AQTGTGKT) coordinates ATP. Residues 165–168 (DEAD) carry the DEAD box motif. The Helicase C-terminal domain occupies 243–390 (KIRLLLTLIE…VSNYDRDALL (148 aa)). A disordered region spans residues 395–439 (PPVKIHRKHPAGARNLRERSGAGRPQGAHRSGGRPPRHDRTRRQP). Residues 425–439 (SGGRPPRHDRTRRQP) are compositionally biased toward basic residues.

This sequence belongs to the DEAD box helicase family. RhlB subfamily. In terms of assembly, component of the RNA degradosome, which is a multiprotein complex involved in RNA processing and mRNA degradation.

It is found in the cytoplasm. It carries out the reaction ATP + H2O = ADP + phosphate + H(+). DEAD-box RNA helicase involved in RNA degradation. Has RNA-dependent ATPase activity and unwinds double-stranded RNA. This chain is ATP-dependent RNA helicase RhlB, found in Shewanella sp. (strain MR-4).